We begin with the raw amino-acid sequence, 198 residues long: Nascent polypeptide-associated complex subunit alpha (198 aa).

An NAC-A/B domain is found at 48 to 113 (ITRVVLKRTR…QAAAETGSVS (66 aa)). One can recognise a UBA domain in the interval 159–198 (LEDSDIKLVMEQANVSRNKAINGLKKNDSDVVNTIMDLCK).

Belongs to the NAC-alpha family. In terms of assembly, part of the nascent polypeptide-associated complex (NAC), consisting of EGD2 and EGD1. NAC associates with ribosomes via EGD1.

The protein localises to the cytoplasm. The protein resides in the nucleus. In terms of biological role, component of the nascent polypeptide-associated complex (NAC), a dynamic component of the ribosomal exit tunnel, protecting the emerging polypeptides from interaction with other cytoplasmic proteins to ensure appropriate nascent protein targeting. The NAC complex also promotes mitochondrial protein import by enhancing productive ribosome interactions with the outer mitochondrial membrane and blocks the inappropriate interaction of ribosomes translating non-secretory nascent polypeptides with translocation sites in the membrane of the endoplasmic reticulum. EGD2 may also be involved in transcription regulation. The sequence is that of Nascent polypeptide-associated complex subunit alpha (EGD2) from Yarrowia lipolytica (strain CLIB 122 / E 150) (Yeast).